The chain runs to 324 residues: DNA repair and recombination protein RadA (324 aa).

ATP is bound at residue 107 to 114 (GEFGSGKS).

The protein belongs to the eukaryotic RecA-like protein family.

Its function is as follows. Involved in DNA repair and in homologous recombination. Binds and assemble on single-stranded DNA to form a nucleoprotein filament. Hydrolyzes ATP in a ssDNA-dependent manner and promotes DNA strand exchange between homologous DNA molecules. In Methanoculleus marisnigri (strain ATCC 35101 / DSM 1498 / JR1), this protein is DNA repair and recombination protein RadA.